Consider the following 494-residue polypeptide: Cytochrome P450 2A10 (494 aa).

Lys-379 bears the N6-acetyllysine mark. Cys-439 is a heme binding site.

This sequence belongs to the cytochrome P450 family. Heme serves as cofactor. As to expression, expressed in liver and lung as well as in nasal tissues.

It localises to the endoplasmic reticulum membrane. The protein resides in the microsome membrane. It catalyses the reaction an organic molecule + reduced [NADPH--hemoprotein reductase] + O2 = an alcohol + oxidized [NADPH--hemoprotein reductase] + H2O + H(+). Its function is as follows. Catalyzes the oxygenation of a variety of substrates, including ethanol and procarcinogens such as N-nitrosodiethylamine and phenacetin. Exhibits a high coumarin 7-hydroxylase activity. Converts also testosterone to androstenedione. This Oryctolagus cuniculus (Rabbit) protein is Cytochrome P450 2A10 (CYP2A10).